The following is a 662-amino-acid chain: Pro-neuregulin-1, membrane-bound isoform (662 aa).

A propeptide spanning residues 1–13 (MSERKEGRGKGKG) is cleaved from the precursor. The segment at 1–52 (MSERKEGRGKGKGKKKDRGSRGKPGPAEGDPSPALPPRLKEMKSQESAAGSK) is disordered. The Extracellular portion of the chain corresponds to 14-265 (KKKDRGSRGK…SKAEELYQKR (252 aa)). Residues 37–128 (PRLKEMKSQE…GNDSASANIT (92 aa)) form the Ig-like C2-type domain. Cysteines 57 and 112 form a disulfide. Asn-120, Asn-126, and Asn-164 each carry an N-linked (GlcNAc...) asparagine glycan. In terms of domain architecture, EGF-like spans 178-222 (HLIKCAEKEKTFCVNGGECFTVKDLSNPSRYLCKCPNEFTGDRCQ). Cystine bridges form between Cys-182–Cys-196, Cys-190–Cys-210, and Cys-212–Cys-221. Residues 266–288 (VLTITGICIALLVVGIMCVVAYC) traverse the membrane as a helical segment. Topologically, residues 289 to 662 (KTKKQRQKLH…VIANQDPIAV (374 aa)) are cytoplasmic. Residues 358-373 (SHYTSTAHHSTTVTQT) are compositionally biased toward low complexity. 3 disordered regions span residues 358–383 (SHYT…NGHT), 398–480 (SVEN…PVSS), and 547–610 (YETT…DTPF). Over residues 374 to 383 (PSHSWSNGHT) the composition is skewed to polar residues. Residues 410–420 (GPRGRLHGLGG) show a composition bias toward gly residues. Residues 425–445 (SFLRHARETPDSYRDSPHSER) are compositionally biased toward basic and acidic residues. Residues 564-574 (TNSRRAKRTKP) show a composition bias toward basic residues. Over residues 585–596 (DSNTSSVSSNSE) the composition is skewed to low complexity.

Belongs to the neuregulin family. The cytoplasmic domain interacts with the LIM domain region of LIMK1. Forms a ternary complex with ERBB3 and ITGAV:ITGB3 or ITGA6:ITGB4. Interacts with NRDC and BACE1. In terms of processing, proteolytic cleavage close to the plasma membrane on the external face leads to the release of the soluble growth factor form. Post-translationally, N- and O-glycosylated. Extensive glycosylation precedes the proteolytic cleavage. In terms of tissue distribution, widely expressed. Most tissues contain isoform alpha2A and isoform alpha2B. Isoform Alpha2 and isoform beta2 are the predominant forms in mesenchymal and non-neuronal organs. Isoform Beta1 is enriched in brain and spinal cord, but not in muscle and heart. Isoform Alpha2C is highly expressed in spinal cord, moderately in lung, brain, ovary, and stomach, in low amounts in the kidney, skin and heart and not detected in the liver, spleen, and placenta.

The protein resides in the cell membrane. The protein localises to the secreted. In terms of biological role, direct ligand for ERBB3 and ERBB4 tyrosine kinase receptors. Concomitantly recruits ERBB1 and ERBB2 coreceptors, resulting in ligand-stimulated tyrosine phosphorylation and activation of the ERBB receptors. The multiple isoforms perform diverse functions such as inducing growth and differentiation of epithelial, glial, neuronal, and skeletal muscle cells; inducing expression of acetylcholine receptor in synaptic vesicles during the formation of the neuromuscular junction; stimulating lobuloalveolar budding and milk production in the mammary gland and inducing differentiation of mammary tumor cells; stimulating Schwann cell proliferation; implication in the development of the myocardium such as trabeculation of the developing heart. Binds to ERBB4 and ERBB3. Acts as a ligand for integrins and binds (via EGF domain) to integrins ITGAV:ITGB3 or ITGA6:ITGB4. Its binding to integrins and subsequent ternary complex formation with integrins and ERRB3 are essential for NRG1-ERBB signaling. Induces the phosphorylation and activation of MAPK3/ERK1, MAPK1/ERK2 and AKT1, and ligand-dependent ERBB4 endocytosis is essential for the NRG1-mediated activation of these kinases in neurons. The polypeptide is Pro-neuregulin-1, membrane-bound isoform (Nrg1) (Rattus norvegicus (Rat)).